The chain runs to 473 residues: Photosystem II CP43 reaction center protein (473 aa).

The propeptide occupies 1-14 (MKTLYSLRRFYHVE). Thr15 is modified (N-acetylthreonine). Thr15 carries the phosphothreonine modification. Transmembrane regions (helical) follow at residues 69-93 (LFEV…PHLA), 134-155 (LLGP…KDRN), 178-200 (KALY…RKIT), 255-275 (KPFA…LSYS), and 291-312 (WFNN…ASQA). Position 367 (Glu367) interacts with [CaMn4O5] cluster. A helical transmembrane segment spans residues 447–471 (RARAAAAGFEKGIDRDFEPVLSMTP).

It belongs to the PsbB/PsbC family. PsbC subfamily. In terms of assembly, PSII is composed of 1 copy each of membrane proteins PsbA, PsbB, PsbC, PsbD, PsbE, PsbF, PsbH, PsbI, PsbJ, PsbK, PsbL, PsbM, PsbT, PsbX, PsbY, PsbZ, Psb30/Ycf12, at least 3 peripheral proteins of the oxygen-evolving complex and a large number of cofactors. It forms dimeric complexes. Binds multiple chlorophylls and provides some of the ligands for the Ca-4Mn-5O cluster of the oxygen-evolving complex. It may also provide a ligand for a Cl- that is required for oxygen evolution. PSII binds additional chlorophylls, carotenoids and specific lipids. is required as a cofactor.

Its subcellular location is the plastid. The protein resides in the chloroplast thylakoid membrane. One of the components of the core complex of photosystem II (PSII). It binds chlorophyll and helps catalyze the primary light-induced photochemical processes of PSII. PSII is a light-driven water:plastoquinone oxidoreductase, using light energy to abstract electrons from H(2)O, generating O(2) and a proton gradient subsequently used for ATP formation. This chain is Photosystem II CP43 reaction center protein, found in Nicotiana tabacum (Common tobacco).